A 289-amino-acid chain; its full sequence is Diaminopimelate epimerase (289 aa).

Positions 13, 47, and 67 each coordinate substrate. Cys-76 acts as the Proton donor in catalysis. Substrate-binding positions include 77–78 (GN), Asn-167, Asn-200, and 218–219 (ER). The active-site Proton acceptor is the Cys-227. Residue 228–229 (GT) coordinates substrate.

The protein belongs to the diaminopimelate epimerase family. In terms of assembly, homodimer.

It is found in the cytoplasm. It carries out the reaction (2S,6S)-2,6-diaminopimelate = meso-2,6-diaminopimelate. The protein operates within amino-acid biosynthesis; L-lysine biosynthesis via DAP pathway; DL-2,6-diaminopimelate from LL-2,6-diaminopimelate: step 1/1. In terms of biological role, catalyzes the stereoinversion of LL-2,6-diaminopimelate (L,L-DAP) to meso-diaminopimelate (meso-DAP), a precursor of L-lysine and an essential component of the bacterial peptidoglycan. This chain is Diaminopimelate epimerase, found in Burkholderia ambifaria (strain ATCC BAA-244 / DSM 16087 / CCUG 44356 / LMG 19182 / AMMD) (Burkholderia cepacia (strain AMMD)).